A 2283-amino-acid chain; its full sequence is DNA polymerase epsilon catalytic subunit A (2283 aa).

A disordered region spans residues 1-32; sequence MVLRNSGRRHPEPGADGEGSRDDGPSSSVSAL. Residues 9–24 show a composition bias toward basic and acidic residues; sequence RHPEPGADGEGSRDDG. 3 positions are modified to phosphoserine: serine 1184, serine 1296, and serine 1316. Disordered stretches follow at residues 1935–1968 and 2014–2041; these read GQVK…GESE and HSAP…TGSL. The span at 1936–1946 shows a compositional bias: basic and acidic residues; sequence QVKEQDSQARE. A compositionally biased stretch (acidic residues) spans 1947–1968; the sequence is ETDEEEEDKEKDEEEEGMGESE. The segment covering 2028-2037 has biased composition (polar residues); that stretch reads SQFSQESEGA. Cysteine 2155, cysteine 2158, cysteine 2184, and cysteine 2187 together coordinate Zn(2+). A CysA-type zinc finger spans residues 2155 to 2187; sequence CHSCNFCRDLDLCKDSSFSQDGAILPQWLCSNC. Positions 2218, 2221, 2233, and 2235 each coordinate [4Fe-4S] cluster. The short motif at 2218–2235 is the CysB motif element; that stretch reads CLKCRGMKETHMPVYCSC.

Belongs to the DNA polymerase type-B family. In terms of assembly, component of the DNA polymerase epsilon complex consisting of four subunits: the catalytic subunit POLE and the accessory subunits POLE2, POLE3 and POLE4. Interacts with RAD17 and TOPBP1. It depends on [4Fe-4S] cluster as a cofactor.

It is found in the nucleus. The catalysed reaction is DNA(n) + a 2'-deoxyribonucleoside 5'-triphosphate = DNA(n+1) + diphosphate. Its function is as follows. Catalytic component of the DNA polymerase epsilon complex. Participates in chromosomal DNA replication. Required during synthesis of the leading DNA strands at the replication fork and binds at/or near replication origins and moves along DNA with the replication fork. Has 3'-5' proofreading exonuclease activity that corrects errors arising during DNA replication. It is also involved in DNA synthesis during DNA repair. The sequence is that of DNA polymerase epsilon catalytic subunit A (Pole) from Mus musculus (Mouse).